Reading from the N-terminus, the 406-residue chain is uncharacterized protein (406 aa).

10 helical membrane passes run 7–27 (SILFSQTTTNLGFSLYTMVVI), 43–63 (VTLISIIFRIFGSAILPLITI), 69–89 (LTIIISQLIQMLLLICLFYAL), 98–118 (LILVFIIISCISFFNGWFSPL), 155–175 (GLIIAFLGEGYTIILTIFLLF), 220–240 (IIIMDLIESWAGMIWIGSVSL), 253–273 (WWGFINGAYYLGSMIGGFIIY), 297–317 (LTLIYGFISNSYLALILVLFM), 352–372 (VQFIFMFSILAIGAISDFLGV), and 374–394 (LVYVSAGILLLVSAIYGFSQL).

The protein belongs to the major facilitator superfamily.

Its subcellular location is the cell membrane. This is an uncharacterized protein from Bacillus subtilis (strain 168).